Reading from the N-terminus, the 880-residue chain is Protein translocase subunit SecA (880 aa).

Residues Gln-86, 104-108 (GEGKT), and Asp-511 each bind ATP. The disordered stretch occupies residues 837–871 (AQKIQRSDGDGARRPVEKPKKIGRNDPCPCGSGKK). Positions 841 to 860 (QRSDGDGARRPVEKPKKIGR) are enriched in basic and acidic residues. Zn(2+)-binding residues include Cys-864, Cys-866, Cys-875, and Cys-876.

The protein belongs to the SecA family. As to quaternary structure, monomer and homodimer. Part of the essential Sec protein translocation apparatus which comprises SecA, SecYEG and auxiliary proteins SecDF. Other proteins may also be involved. Zn(2+) serves as cofactor.

It localises to the cell inner membrane. Its subcellular location is the cytoplasm. It catalyses the reaction ATP + H2O + cellular proteinSide 1 = ADP + phosphate + cellular proteinSide 2.. In terms of biological role, part of the Sec protein translocase complex. Interacts with the SecYEG preprotein conducting channel. Has a central role in coupling the hydrolysis of ATP to the transfer of proteins into and across the cell membrane, serving as an ATP-driven molecular motor driving the stepwise translocation of polypeptide chains across the membrane. This chain is Protein translocase subunit SecA, found in Thermodesulfovibrio yellowstonii (strain ATCC 51303 / DSM 11347 / YP87).